We begin with the raw amino-acid sequence, 862 residues long: Protein SEY1 (862 aa).

The Cytoplasmic portion of the chain corresponds to 1 to 743 (MASNGHFSSV…KRSAIGGITQ (743 aa)). A GB1/RHD3-type G domain is found at 48–301 (GFNYHLISVF…IPADGFAVYA (254 aa)). 58–65 (GSQSTGKS) is a GTP binding site. Residues 476 to 500 (SDYKQELSLFQKDLEKISSQLRKDE) adopt a coiled-coil conformation. A helical transmembrane segment spans residues 744 to 764 (VPLYFYGLLLALGWNEIIAVL). The Lumenal segment spans residues 765–767 (RNP). The helical transmembrane segment at 768–788 (IYFIFLLLIGVGAYVTFRLNL) threads the bilayer. Residues 789–862 (WGPMINMAEA…TSDDDNDDDL (74 aa)) are Cytoplasmic-facing. The disordered stretch occupies residues 818–862 (SDSGRQAMAMSGRNARGTEEYEMSSNLKSKGRRTDTSDDDNDDDL).

Belongs to the TRAFAC class dynamin-like GTPase superfamily. GB1/RHD3 GTPase family. RHD3 subfamily.

It localises to the endoplasmic reticulum membrane. In terms of biological role, cooperates with the reticulon proteins and tubule-shaping DP1 family proteins to generate and maintain the structure of the tubular endoplasmic reticulum network. Has GTPase activity, which is required for its function in ER organization. In Arthroderma otae (strain ATCC MYA-4605 / CBS 113480) (Microsporum canis), this protein is Protein SEY1.